The primary structure comprises 78 residues: Large ribosomal subunit protein bL28 (78 aa).

Residues Met-1 to Thr-25 are disordered.

It belongs to the bacterial ribosomal protein bL28 family.

In Vibrio cholerae serotype O1 (strain ATCC 39541 / Classical Ogawa 395 / O395), this protein is Large ribosomal subunit protein bL28.